Here is a 321-residue protein sequence, read N- to C-terminus: AA9 family lytic polysaccharide monooxygenase C (321 aa).

Residues 1 to 18 (MKLQLIIPFSFLISYVSA) form the signal peptide. Cu(2+) is bound at residue His-19. The N-linked (GlcNAc...) asparagine glycan is linked to Asn-33. 2 cysteine pairs are disulfide-bonded: Cys-57–Cys-191 and Cys-161–Cys-242. A Cu(2+)-binding site is contributed by His-103. O2 is bound by residues His-177 and Gln-186. Tyr-188 is a Cu(2+) binding site. The N-linked (GlcNAc...) asparagine glycan is linked to Asn-195. The CBM1 domain occupies 283–319 (GTAAIYAQCGGQGWTGATVCASGSKCVVSSAFYSQCL).

The protein belongs to the polysaccharide monooxygenase AA9 family. Cu(2+) serves as cofactor.

The protein resides in the secreted. The enzyme catalyses [(1-&gt;4)-beta-D-glucosyl]n+m + reduced acceptor + O2 = 4-dehydro-beta-D-glucosyl-[(1-&gt;4)-beta-D-glucosyl]n-1 + [(1-&gt;4)-beta-D-glucosyl]m + acceptor + H2O.. Major lytic polysaccharide monooxygenase (LPMO) that depolymerizes crystalline and amorphous polysaccharides via the oxidation of scissile alpha- or beta-(1-4)-glycosidic bonds, yielding C1 and C4 oxidation products. Catalysis by LPMOs requires the reduction of the active-site copper from Cu(II) to Cu(I) by a reducing agent and H(2)O(2) or O(2) as a cosubstrate. The chain is AA9 family lytic polysaccharide monooxygenase C from Botryotinia fuckeliana (strain B05.10) (Noble rot fungus).